The following is a 455-amino-acid chain: Chromosomal replication initiator protein DnaA (455 aa).

The tract at residues 1 to 73 is domain I, interacts with DnaA modulators; that stretch reads MTISPQYIWN…LEEVETIVGY (73 aa). The interval 73-114 is domain II; sequence YPIAVKLTTSQEQNLRIVDKNKDNLSSTKLQNKRQQESPKLN. The tract at residues 115–331 is domain III, AAA+ region; the sequence is QLNPRYNFSR…GALIRAVTYI (217 aa). The ATP site is built by Gly-159, Gly-161, Lys-162, and Thr-163. The domain IV, binds dsDNA stretch occupies residues 332-455; it reads SISGLSMTVE…RINIASRNQN (124 aa).

The protein belongs to the DnaA family. In terms of assembly, oligomerizes as a right-handed, spiral filament on DNA at oriC.

Its subcellular location is the cytoplasm. Plays an essential role in the initiation and regulation of chromosomal replication. ATP-DnaA binds to the origin of replication (oriC) to initiate formation of the DNA replication initiation complex once per cell cycle. Binds the DnaA box (a 9 base pair repeat at the origin) and separates the double-stranded (ds)DNA. Forms a right-handed helical filament on oriC DNA; dsDNA binds to the exterior of the filament while single-stranded (ss)DNA is stabiized in the filament's interior. The ATP-DnaA-oriC complex binds and stabilizes one strand of the AT-rich DNA unwinding element (DUE), permitting loading of DNA polymerase. After initiation quickly degrades to an ADP-DnaA complex that is not apt for DNA replication. Binds acidic phospholipids. This is Chromosomal replication initiator protein DnaA from Crocosphaera subtropica (strain ATCC 51142 / BH68) (Cyanothece sp. (strain ATCC 51142)).